The primary structure comprises 555 residues: 2-isopropylmalate synthase (555 aa).

The Pyruvate carboxyltransferase domain occupies 30-303 (PIWCSVDLRD…DPGLDCTDIN (274 aa)). Residues D39, H242, H244, and N278 each contribute to the Mg(2+) site. The tract at residues 437–555 (QPDARIKFVD…VSAANRVIAK (119 aa)) is regulatory domain.

Belongs to the alpha-IPM synthase/homocitrate synthase family. LeuA type 2 subfamily. In terms of assembly, homodimer. Requires Mg(2+) as cofactor.

The protein resides in the cytoplasm. It carries out the reaction 3-methyl-2-oxobutanoate + acetyl-CoA + H2O = (2S)-2-isopropylmalate + CoA + H(+). It functions in the pathway amino-acid biosynthesis; L-leucine biosynthesis; L-leucine from 3-methyl-2-oxobutanoate: step 1/4. Functionally, catalyzes the condensation of the acetyl group of acetyl-CoA with 3-methyl-2-oxobutanoate (2-ketoisovalerate) to form 3-carboxy-3-hydroxy-4-methylpentanoate (2-isopropylmalate). The polypeptide is 2-isopropylmalate synthase (Brucella melitensis biotype 1 (strain ATCC 23456 / CCUG 17765 / NCTC 10094 / 16M)).